The sequence spans 274 residues: 4-diphosphocytidyl-2-C-methyl-D-erythritol kinase (274 aa).

Lysine 7 is an active-site residue. ATP is bound at residue 90–100; the sequence is PMGGGLGGGSS. Aspartate 132 is an active-site residue.

Belongs to the GHMP kinase family. IspE subfamily.

The enzyme catalyses 4-CDP-2-C-methyl-D-erythritol + ATP = 4-CDP-2-C-methyl-D-erythritol 2-phosphate + ADP + H(+). Its pathway is isoprenoid biosynthesis; isopentenyl diphosphate biosynthesis via DXP pathway; isopentenyl diphosphate from 1-deoxy-D-xylulose 5-phosphate: step 3/6. Its function is as follows. Catalyzes the phosphorylation of the position 2 hydroxy group of 4-diphosphocytidyl-2C-methyl-D-erythritol. The polypeptide is 4-diphosphocytidyl-2-C-methyl-D-erythritol kinase (Dechloromonas aromatica (strain RCB)).